We begin with the raw amino-acid sequence, 347 residues long: Ferredoxin--NADP reductase 1 (347 aa).

Positions 26, 45, 53, 58, 98, 133, 298, and 339 each coordinate FAD.

Belongs to the ferredoxin--NADP reductase type 2 family. In terms of assembly, homodimer. The cofactor is FAD.

The enzyme catalyses 2 reduced [2Fe-2S]-[ferredoxin] + NADP(+) + H(+) = 2 oxidized [2Fe-2S]-[ferredoxin] + NADPH. This is Ferredoxin--NADP reductase 1 from Chloroherpeton thalassium (strain ATCC 35110 / GB-78).